Here is a 330-residue protein sequence, read N- to C-terminus: Protein-lysine N-methyltransferase EEF2KMT (330 aa).

At M1 the chain carries N-acetylmethionine. S-adenosyl-L-methionine is bound by residues W139, 165 to 167 (GSG), W228, and A247.

This sequence belongs to the class I-like SAM-binding methyltransferase superfamily. EEF2KMT family. Interacts with FAM86B2 and FAM86C1P.

The protein resides in the cytoplasm. The enzyme catalyses L-lysyl-[protein] + 3 S-adenosyl-L-methionine = N(6),N(6),N(6)-trimethyl-L-lysyl-[protein] + 3 S-adenosyl-L-homocysteine + 3 H(+). Catalyzes the trimethylation of eukaryotic elongation factor 2 (EEF2) on 'Lys-525'. This chain is Protein-lysine N-methyltransferase EEF2KMT, found in Homo sapiens (Human).